We begin with the raw amino-acid sequence, 623 residues long: Serine/threonine-protein kinase nrc-2 (623 aa).

Residues 1–215 form a disordered region; the sequence is MPSTKNANGE…GLGALPPPIR (215 aa). Composition is skewed to basic and acidic residues over residues 27-36 and 170-180; these read SKDHKDRDAH and LSKEPLEESKD. Residues 199 to 209 are compositionally biased toward low complexity; it reads LAAPDADGLGA. The 291-residue stretch at 242–532 folds into the Protein kinase domain; that stretch reads FDKIKLIGKG…ASDIKTHPFF (291 aa). Residues 248–256 and Lys-271 contribute to the ATP site; that span reads IGKGDVGKV. Asp-367 serves as the catalytic Proton acceptor. A disordered region spans residues 569 to 596; the sequence is VDISGSRQMGLKGEPLESGMVTPGENAV.

This sequence belongs to the protein kinase superfamily. Ser/Thr protein kinase family. KIN82 subfamily.

It catalyses the reaction L-seryl-[protein] + ATP = O-phospho-L-seryl-[protein] + ADP + H(+). The catalysed reaction is L-threonyl-[protein] + ATP = O-phospho-L-threonyl-[protein] + ADP + H(+). Its function is as follows. Controls entry of the cell into the asexual developmental program. Required to repress entry into the conidiation program. This Neurospora crassa (strain ATCC 24698 / 74-OR23-1A / CBS 708.71 / DSM 1257 / FGSC 987) protein is Serine/threonine-protein kinase nrc-2 (nrc-2).